Here is a 212-residue protein sequence, read N- to C-terminus: NADH dehydrogenase [ubiquinone] iron-sulfur protein 8, mitochondrial (212 aa).

A mitochondrion-targeting transit peptide spans 1 to 34; that stretch reads MYRLSSSMLPRALAQAMRTGHLNGQSLHSSAVAA. 4Fe-4S ferredoxin-type domains are found at residues 104–133 and 143–172; these read RRYP…IEAE and TRYD…EGPN. Cysteine 113, cysteine 116, cysteine 119, cysteine 123, cysteine 152, cysteine 155, cysteine 158, and cysteine 162 together coordinate [4Fe-4S] cluster.

It belongs to the complex I 23 kDa subunit family. In terms of assembly, complex I is composed of 45 different subunits. This is a component of the iron-sulfur (IP) fragment of the enzyme. Interacts with RAB5IF. Requires [4Fe-4S] cluster as cofactor.

It localises to the mitochondrion inner membrane. It catalyses the reaction a ubiquinone + NADH + 5 H(+)(in) = a ubiquinol + NAD(+) + 4 H(+)(out). Functionally, core subunit of the mitochondrial membrane respiratory chain NADH dehydrogenase (Complex I) which catalyzes electron transfer from NADH through the respiratory chain, using ubiquinone as an electron acceptor. Essential for the catalytic activity and assembly of complex I. The protein is NADH dehydrogenase [ubiquinone] iron-sulfur protein 8, mitochondrial (Ndufs8) of Mus musculus (Mouse).